The primary structure comprises 296 residues: Probable AP endonuclease (296 aa).

An intrachain disulfide couples C16 to C20. Residues H78, H115, E142, H182, H218, D231, H233, and E271 each contribute to the Zn(2+) site.

The protein belongs to the AP endonuclease 2 family. Zn(2+) serves as cofactor.

The protein localises to the host nucleus. Its subcellular location is the host cytoplasm. The protein resides in the virion. Functionally, endonuclease of the viral base excision repair system that catalyzes DNA cleavage reaction at the apurinic or apyrimidinic sites (AP sites). Cleaves phosphodiester bonds on the 5' side of AP sites. In addition to endonuclease activity, the AP endonuclease has a proofreading 3'-5' exonuclease activity that is considerably more efficient in the elimination of a mismatch than in that of a correctly paired base. Displays 3'-phosphatase and 3'-repair diesterase activities. The single nucleotide gaps generated by the AP endonuclease are filled by the viral repair DNA polymerase X and the DNA ligase. The chain is Probable AP endonuclease from Ornithodoros (relapsing fever ticks).